The primary structure comprises 302 residues: Pathogenicity locus probable regulatory protein HrpS (302 aa).

In terms of domain architecture, Sigma-54 factor interaction spans aspartate 9 to leucine 237. Residues glycine 37–aspartate 44 and alanine 99–glutamate 108 each bind ATP. Residues isoleucine 279–lysine 298 constitute a DNA-binding region (H-T-H motif).

Its function is as follows. Regulates the activation of the sigma factor HrpL which itself induces the expression of hprD as well as other hrp loci which are involved in plant pathogenicity, hrmA and avr genes. Probably interacts with sigma-54. In Pseudomonas syringae pv. syringae, this protein is Pathogenicity locus probable regulatory protein HrpS (hrpS).